The following is a 340-amino-acid chain: DNA-directed RNA polymerase subunit alpha (340 aa).

Residues 1 to 233 (MVREEVAVST…DLFIPFLHAE (233 aa)) are alpha N-terminal domain (alpha-NTD). The interval 266 to 340 (KKEIALKCIF…GIDLPKNKRF (75 aa)) is alpha C-terminal domain (alpha-CTD).

This sequence belongs to the RNA polymerase alpha chain family. As to quaternary structure, in plastids the minimal PEP RNA polymerase catalytic core is composed of four subunits: alpha, beta, beta', and beta''. When a (nuclear-encoded) sigma factor is associated with the core the holoenzyme is formed, which can initiate transcription.

It localises to the plastid. Its subcellular location is the chloroplast. The enzyme catalyses RNA(n) + a ribonucleoside 5'-triphosphate = RNA(n+1) + diphosphate. DNA-dependent RNA polymerase catalyzes the transcription of DNA into RNA using the four ribonucleoside triphosphates as substrates. The protein is DNA-directed RNA polymerase subunit alpha of Calycanthus floridus var. glaucus (Eastern sweetshrub).